The following is a 30-amino-acid chain: Photosystem I reaction center subunit XII (30 aa).

A helical transmembrane segment spans residues 6 to 26; the sequence is VFTILAIALVPAVMAALLGSA.

This sequence belongs to the PsaM family.

It is found in the cellular thylakoid membrane. In Synechococcus sp. (strain JA-3-3Ab) (Cyanobacteria bacterium Yellowstone A-Prime), this protein is Photosystem I reaction center subunit XII.